We begin with the raw amino-acid sequence, 406 residues long: Solanesyl diphosphate synthase 1, chloroplastic (406 aa).

Residues 1–71 (MMTSCRNIDL…NGIGQSQTVS (71 aa)) constitute a chloroplast transit peptide. Positions 126, 129, and 164 each coordinate isopentenyl diphosphate. D171 and D175 together coordinate Mg(2+). An all-trans-polyprenyl diphosphate is bound at residue R180. R181 serves as a coordination point for isopentenyl diphosphate. 4 residues coordinate an all-trans-polyprenyl diphosphate: K257, T258, Q295, and K312.

It belongs to the FPP/GGPP synthase family. As to quaternary structure, homodimer. Interacts with FBN5. Mg(2+) serves as cofactor. As to expression, higher expression in leaves than in roots.

Its subcellular location is the plastid. The protein resides in the chloroplast. It catalyses the reaction 5 isopentenyl diphosphate + (2E,6E,10E)-geranylgeranyl diphosphate = all-trans-nonaprenyl diphosphate + 5 diphosphate. The enzyme catalyses isopentenyl diphosphate + (2E,6E)-farnesyl diphosphate = (2E,6E,10E)-geranylgeranyl diphosphate + diphosphate. Functionally, involved in providing solanesyl diphosphate for plastoquinone-9 (PQ-9) formation in plastids. Catalyzes the elongation of the prenyl side chain of PQ-9 in plastids. Contributes to the biosynthesis of plastochromanol-8 (PC-8) in plastids. Does not contribute to the synthesis of tocopherol or ubiquinone. PQ-9 and PC-8 are lipophilic antioxidants that act as protectant against photooxidative stress under high light stress conditions. Prefers geranylgeranyl diphosphate to farnesyl diphosphate as substrate. No activity with geranyl diphosphate or dimethylallyl diphosphate as substrate. The protein is Solanesyl diphosphate synthase 1, chloroplastic of Arabidopsis thaliana (Mouse-ear cress).